Consider the following 285-residue polypeptide: Probable endonuclease 4 (285 aa).

H69, H109, E145, D179, H182, H216, D229, H231, and E261 together coordinate Zn(2+).

This sequence belongs to the AP endonuclease 2 family. The cofactor is Zn(2+).

It catalyses the reaction Endonucleolytic cleavage to 5'-phosphooligonucleotide end-products.. Its function is as follows. Endonuclease IV plays a role in DNA repair. It cleaves phosphodiester bonds at apurinic or apyrimidinic (AP) sites, generating a 3'-hydroxyl group and a 5'-terminal sugar phosphate. The polypeptide is Probable endonuclease 4 (Shigella boydii serotype 4 (strain Sb227)).